We begin with the raw amino-acid sequence, 354 residues long: Nicotinate-nucleotide--dimethylbenzimidazole phosphoribosyltransferase (354 aa).

Residue Glu319 is the Proton acceptor of the active site.

It belongs to the CobT family.

It carries out the reaction 5,6-dimethylbenzimidazole + nicotinate beta-D-ribonucleotide = alpha-ribazole 5'-phosphate + nicotinate + H(+). The protein operates within nucleoside biosynthesis; alpha-ribazole biosynthesis; alpha-ribazole from 5,6-dimethylbenzimidazole: step 1/2. Functionally, catalyzes the synthesis of alpha-ribazole-5'-phosphate from nicotinate mononucleotide (NAMN) and 5,6-dimethylbenzimidazole (DMB). This is Nicotinate-nucleotide--dimethylbenzimidazole phosphoribosyltransferase from Chlorobium chlorochromatii (strain CaD3).